Reading from the N-terminus, the 250-residue chain is Non-specific acid phosphatase (250 aa).

The signal sequence occupies residues 1–20 (MKSRYLVFFLPLIVAKYTSA).

The protein belongs to the class A bacterial acid phosphatase family. As to quaternary structure, homodimer.

It is found in the periplasm. It carries out the reaction a phosphate monoester + H2O = an alcohol + phosphate. In Salmonella typhimurium (strain LT2 / SGSC1412 / ATCC 700720), this protein is Non-specific acid phosphatase (phoN).